Here is a 364-residue protein sequence, read N- to C-terminus: Mannose-1-phosphate guanyltransferase (364 aa).

It belongs to the transferase hexapeptide repeat family.

The protein resides in the cytoplasm. The enzyme catalyses alpha-D-mannose 1-phosphate + GTP + H(+) = GDP-alpha-D-mannose + diphosphate. The protein operates within nucleotide-sugar biosynthesis; GDP-alpha-D-mannose biosynthesis; GDP-alpha-D-mannose from alpha-D-mannose 1-phosphate (GTP route): step 1/1. Involved in cell wall synthesis where it is required for glycosylation. Involved in cell cycle progression through cell-size checkpoint. In Aspergillus fumigatus (strain ATCC MYA-4609 / CBS 101355 / FGSC A1100 / Af293) (Neosartorya fumigata), this protein is Mannose-1-phosphate guanyltransferase (mpg1).